A 239-amino-acid chain; its full sequence is Mediator of RNA polymerase II transcription subunit 7 (239 aa).

Disordered regions lie at residues 1–21 (MSSL…PPPP) and 43–66 (LFVN…DMSV). The span at 46–66 (NDEKGKTKGKEKKSDDRDMSV) shows a compositional bias: basic and acidic residues.

It belongs to the Mediator complex subunit 7 family. In terms of assembly, component of the Mediator complex.

The protein resides in the nucleus. Its function is as follows. Component of the Mediator complex, a coactivator involved in the regulated transcription of nearly all RNA polymerase II-dependent genes. Mediator functions as a bridge to convey information from gene-specific regulatory proteins to the basal RNA polymerase II transcription machinery. Mediator is recruited to promoters by direct interactions with regulatory proteins and serves as a scaffold for the assembly of a functional preinitiation complex with RNA polymerase II and the general transcription factors. The sequence is that of Mediator of RNA polymerase II transcription subunit 7 (MED7) from Cryptococcus neoformans var. neoformans serotype D (strain B-3501A) (Filobasidiella neoformans).